Reading from the N-terminus, the 68-residue chain is conotoxin S11.3 (68 aa).

The N-terminal stretch at 1–26 (MMFRLTSVSCFLLVIVCLNLFQVVLT) is a signal peptide. Cystine bridges form between Cys-29–Cys-43, Cys-36–Cys-48, Cys-42–Cys-52, and Cys-47–Cys-56. Position 60 is a tyrosine amide (Tyr-60). The propeptide occupies 64-68 (ATFQE).

The protein belongs to the conotoxin I2 superfamily. In terms of tissue distribution, expressed by the venom duct.

The protein localises to the secreted. The protein is conotoxin S11.3 of Conus striatus (Striated cone).